Consider the following 448-residue polypeptide: Probable intron-encoded endonuclease bI1 (448 aa).

A cob exon 1 encoded region spans residues 1 to 132 (MRLLKSHPLL…LMMATAFLGY (132 aa)). The next 3 helical transmembrane spans lie at 32-52 (FGSL…TLAM), 86-106 (ASAF…YGSY), and 112-132 (LVWA…FLGY). Residues 133–448 (QHSPKWFDIS…QWIVEDFSDK (316 aa)) are cob intron 1 encoded. The GIY-YIG domain occupies 230–321 (DLSGVYMIIN…LKLLVPNYNI (92 aa)).

It to endonucleases of group I introns of fungi and phage. In terms of processing, the mature protein may arise from proteolytic cleavage of an in-frame translation of cob exon 1 plus intron 1, containing the bI1 open reading frame.

The protein localises to the mitochondrion inner membrane. In terms of biological role, mitochondrial DNA endonuclease involved in intron homing. The sequence is that of Probable intron-encoded endonuclease bI1 (bI1) from Neurospora crassa (strain ATCC 24698 / 74-OR23-1A / CBS 708.71 / DSM 1257 / FGSC 987).